We begin with the raw amino-acid sequence, 160 residues long: MTKIRIGNGYDIHQLVSDRVLILGGIQIPHELGLLGHSDADVLTHAIMDAMLGALSLGDIGHYFPPSDPKWAGADSLVLLNQVHQLIRDRGWQVGNIDSVVVAERPKLKPHIHNMRDKLAAILELESNQIGIKATTNEKLGPVGREEGICAYAVVLLLKE.

Residues D11 and H13 each coordinate a divalent metal cation. 4-CDP-2-C-methyl-D-erythritol 2-phosphate-binding positions include 11 to 13 and 37 to 38; these read DIH and HS. H45 contributes to the a divalent metal cation binding site. Residues 59–61, 135–138, and R145 each bind 4-CDP-2-C-methyl-D-erythritol 2-phosphate; these read DIG and TTNE.

Belongs to the IspF family. Homotrimer. It depends on a divalent metal cation as a cofactor.

The enzyme catalyses 4-CDP-2-C-methyl-D-erythritol 2-phosphate = 2-C-methyl-D-erythritol 2,4-cyclic diphosphate + CMP. It participates in isoprenoid biosynthesis; isopentenyl diphosphate biosynthesis via DXP pathway; isopentenyl diphosphate from 1-deoxy-D-xylulose 5-phosphate: step 4/6. Its function is as follows. Involved in the biosynthesis of isopentenyl diphosphate (IPP) and dimethylallyl diphosphate (DMAPP), two major building blocks of isoprenoid compounds. Catalyzes the conversion of 4-diphosphocytidyl-2-C-methyl-D-erythritol 2-phosphate (CDP-ME2P) to 2-C-methyl-D-erythritol 2,4-cyclodiphosphate (ME-CPP) with a corresponding release of cytidine 5-monophosphate (CMP). In Nostoc punctiforme (strain ATCC 29133 / PCC 73102), this protein is 2-C-methyl-D-erythritol 2,4-cyclodiphosphate synthase.